The primary structure comprises 316 residues: MEGKDAVAIRSIVSRAKIAMTDQTPGFKVDPAFVKVKQNNQTDAFYTTQRKLSGGQTNGGSNNSNDKHHYLQDAVRLTSSQAMAAASTGAGSSSGTNVGGSSGGNSVLIPLPRSAALTHTQQQVQQTTSTLQTPVYARGDDGTYALAIDGGDYFLANNKRDFTKQADILLYRYLQAKSNNFKENGVEFSLNLLESGSLFQTWAQTGLTAKLYGALVAMMGSGQGTQVKGSVQGSSRAASVSVQTTQQSRQQSTDTQESEVVKLAKALLKSSADLAKPFTDNPTFKKALTDIQSEYKDYLAAAGKLSEFKKDLGEVS.

2 disordered regions span residues 82-105 (AMAA…SGGN) and 238-257 (ASVS…DTQE). Composition is skewed to low complexity over residues 84 to 96 (AAAS…SSGT) and 239 to 255 (SVSV…STDT).

This sequence belongs to the MG307/MG309/MG338 family.

This is an uncharacterized protein from Mycoplasma pneumoniae (strain ATCC 29342 / M129 / Subtype 1) (Mycoplasmoides pneumoniae).